The chain runs to 498 residues: MTAPAAANAALDQTVVSLPVQETARVVRDTRPLRLITCGSVDDGKSTLIGRLLWDTKAVKEDQAASLQRDSSGKQNDLGLPDFALLLDGLQAEREQGITIDVAYRYFATDKRSFIVADTPGHEQYTRNMATGASTADLAVLLVDARVGLLEQTRRHATIATLMGIRQFVLAVNKIDLTNYDRARFDQISHEFRELALSLGVRQVTAIPVSALKGENVVYDGRASMPWYDGPTLIEILELATTRSAQTVGFRLPVQRVSRPGESFRGYQGTVAGGSVKPGDSVVILPSGMVANVSKIVTFDLVRNAAVAGDAITLVLDRQVDVSRGDVIASIDSQPTTGLAFDAQLVALQPEGIQPGKRYWLKSGSRRQRVQVQPVSQLELKSGKWNHADELPMNAIGKVHLAFDEQAIFDTYEQNRTTGAFILIDPDTNNTVAGGMITAKRAALGGIHAEESRVILSLPADLADQLMATELFASRREDVEVRRVTAGKAVNIIDAIDG.

A tr-type G domain is found at 30–246 (TRPLRLITCG…LELATTRSAQ (217 aa)). The G1 stretch occupies residues 39–46 (GSVDDGKS). GTP is bound at residue 39–46 (GSVDDGKS). A G2 region spans residues 97–101 (GITID). The segment at 118–121 (DTPG) is G3. GTP contacts are provided by residues 118–122 (DTPGH) and 173–176 (NKID). The tract at residues 173–176 (NKID) is G4. The segment at 210-212 (SAL) is G5.

Belongs to the TRAFAC class translation factor GTPase superfamily. Classic translation factor GTPase family. CysN/NodQ subfamily. As to quaternary structure, heterodimer composed of CysD, the smaller subunit, and CysN.

The enzyme catalyses sulfate + ATP + H(+) = adenosine 5'-phosphosulfate + diphosphate. It functions in the pathway sulfur metabolism; hydrogen sulfide biosynthesis; sulfite from sulfate: step 1/3. In terms of biological role, with CysD forms the ATP sulfurylase (ATPS) that catalyzes the adenylation of sulfate producing adenosine 5'-phosphosulfate (APS) and diphosphate, the first enzymatic step in sulfur assimilation pathway. APS synthesis involves the formation of a high-energy phosphoric-sulfuric acid anhydride bond driven by GTP hydrolysis by CysN coupled to ATP hydrolysis by CysD. This chain is Sulfate adenylyltransferase subunit 1, found in Rhizobium meliloti (strain 1021) (Ensifer meliloti).